The following is a 180-amino-acid chain: Probable galaptin lec-8 (180 aa).

One can recognise a Galectin domain in the interval 11–138; the sequence is SAHAIREQLR…AAHIDEISFS (128 aa).

This is Probable galaptin lec-8 (lec-8) from Caenorhabditis elegans.